Reading from the N-terminus, the 467-residue chain is ATP synthase subunit beta (467 aa).

Position 150 to 157 (150 to 157) interacts with ATP; the sequence is GGAGVGKT.

The protein belongs to the ATPase alpha/beta chains family. In terms of assembly, F-type ATPases have 2 components, CF(1) - the catalytic core - and CF(0) - the membrane proton channel. CF(1) has five subunits: alpha(3), beta(3), gamma(1), delta(1), epsilon(1). CF(0) has three main subunits: a(1), b(2) and c(9-12). The alpha and beta chains form an alternating ring which encloses part of the gamma chain. CF(1) is attached to CF(0) by a central stalk formed by the gamma and epsilon chains, while a peripheral stalk is formed by the delta and b chains.

The protein localises to the cell inner membrane. The catalysed reaction is ATP + H2O + 4 H(+)(in) = ADP + phosphate + 5 H(+)(out). Functionally, produces ATP from ADP in the presence of a proton gradient across the membrane. The catalytic sites are hosted primarily by the beta subunits. This chain is ATP synthase subunit beta, found in Vibrio cholerae serotype O1 (strain ATCC 39541 / Classical Ogawa 395 / O395).